The sequence spans 955 residues: uncharacterized protein (955 aa).

One can recognise an Importin N-terminal domain in the interval 23–90; that stretch reads ANNYLEEFQK…RNSLLQLFLA (68 aa).

This is an uncharacterized protein from Schizosaccharomyces pombe (strain 972 / ATCC 24843) (Fission yeast).